A 342-amino-acid chain; its full sequence is Phosphate acyltransferase (342 aa).

It belongs to the PlsX family. As to quaternary structure, homodimer. Probably interacts with PlsY.

The protein resides in the cytoplasm. It catalyses the reaction a fatty acyl-[ACP] + phosphate = an acyl phosphate + holo-[ACP]. It functions in the pathway lipid metabolism; phospholipid metabolism. Functionally, catalyzes the reversible formation of acyl-phosphate (acyl-PO(4)) from acyl-[acyl-carrier-protein] (acyl-ACP). This enzyme utilizes acyl-ACP as fatty acyl donor, but not acyl-CoA. The sequence is that of Phosphate acyltransferase from Shewanella woodyi (strain ATCC 51908 / MS32).